Reading from the N-terminus, the 178-residue chain is Zinc finger protein ZAT11 (178 aa).

C2H2-type zinc fingers lie at residues 47–69 (FECK…RASH) and 94–116 (HKCS…MRRH).

Expressed in leaves.

The protein localises to the nucleus. In terms of biological role, probable transcription factor that may be involved in stress responses. The protein is Zinc finger protein ZAT11 (ZAT11) of Arabidopsis thaliana (Mouse-ear cress).